The chain runs to 308 residues: Elongation factor Ts (308 aa).

Residues Thr80–Val83 form an involved in Mg(2+) ion dislocation from EF-Tu region.

It belongs to the EF-Ts family.

The protein resides in the cytoplasm. Associates with the EF-Tu.GDP complex and induces the exchange of GDP to GTP. It remains bound to the aminoacyl-tRNA.EF-Tu.GTP complex up to the GTP hydrolysis stage on the ribosome. The chain is Elongation factor Ts from Erythrobacter litoralis (strain HTCC2594).